The following is a 172-amino-acid chain: uncharacterized protein (172 aa).

The region spanning 21–75 is the HTH cro/C1-type domain; sequence FKRILLELGLTLKEFSEISGIPYSTLYKVIQGKDFRVSTLIKILKTIRSFEKDEN. The segment at residues 32 to 51 is a DNA-binding region (H-T-H motif); that stretch reads LKEFSEISGIPYSTLYKVIQ.

This is an uncharacterized protein from Methanocaldococcus jannaschii (strain ATCC 43067 / DSM 2661 / JAL-1 / JCM 10045 / NBRC 100440) (Methanococcus jannaschii).